The primary structure comprises 118 residues: Co-chaperonin GroES (118 aa).

It belongs to the GroES chaperonin family. In terms of assembly, heptamer of 7 subunits arranged in a ring. Interacts with the chaperonin GroEL.

The protein localises to the cytoplasm. In terms of biological role, together with the chaperonin GroEL, plays an essential role in assisting protein folding. The GroEL-GroES system forms a nano-cage that allows encapsulation of the non-native substrate proteins and provides a physical environment optimized to promote and accelerate protein folding. GroES binds to the apical surface of the GroEL ring, thereby capping the opening of the GroEL channel. The sequence is that of Co-chaperonin GroES from Helicobacter pylori (strain HPAG1).